Consider the following 128-residue polypeptide: MLTPLQTYFPIAVALLVAVGLAAVMLALANVLGPRRPSEVKSTPFECGSLPVSPARERFSVKFYVVALLFIVFDIEAIFLYPWAVLLLPSDGYPGLGWAGYISMGIFVATLVAGLVYVWKKGVLDWAD.

Helical transmembrane passes span 9–29 (FPIA…LALA), 68–88 (LLFI…VLLL), and 96–116 (LGWA…AGLV).

This sequence belongs to the complex I subunit 3 family. In terms of assembly, NDH-1 is composed of 14 different subunits. Subunits NuoA, H, J, K, L, M, N constitute the membrane sector of the complex.

It localises to the cell inner membrane. The catalysed reaction is a quinone + NADH + 5 H(+)(in) = a quinol + NAD(+) + 4 H(+)(out). NDH-1 shuttles electrons from NADH, via FMN and iron-sulfur (Fe-S) centers, to quinones in the respiratory chain. The immediate electron acceptor for the enzyme in this species is believed to be ubiquinone. Couples the redox reaction to proton translocation (for every two electrons transferred, four hydrogen ions are translocated across the cytoplasmic membrane), and thus conserves the redox energy in a proton gradient. The sequence is that of NADH-quinone oxidoreductase subunit A from Anaeromyxobacter sp. (strain Fw109-5).